A 701-amino-acid polypeptide reads, in one-letter code: Probable cytosolic oligopeptidase A (701 aa).

The residue at position 2 (A2) is an N-acetylalanine. Residues 148-194 (IALEDDKREEFNKIEQELEKLSHKFSENVLDATKKFEKLITDKKEIE) are a coiled coil. A Zn(2+)-binding site is contributed by H483. E484 is an active-site residue. The Zn(2+) site is built by H487 and E513. 615-621 (HIFAGGY) provides a ligand contact to substrate.

This sequence belongs to the peptidase M3 family. The cofactor is Zn(2+).

The protein localises to the cytoplasm. It is found in the cytosol. The catalysed reaction is Hydrolysis of oligopeptides, with broad specificity. Gly or Ala commonly occur as P1 or P1' residues, but more distant residues are also important, as is shown by the fact that Z-Gly-Pro-Gly-|-Gly-Pro-Ala is cleaved, but not Z-(Gly)(5).. Inhibited by salicylic acid. Its function is as follows. Oligopeptidase that may be involved in the degradation of proteasome-generated peptides. Binds salicylic acid. The protein is Probable cytosolic oligopeptidase A of Arabidopsis thaliana (Mouse-ear cress).